Consider the following 336-residue polypeptide: Phosphonate dehydrogenase (336 aa).

NAD(+)-binding positions include 155–156 (AI), Glu-175, 235–237 (PCR), and Asp-261. Residue Arg-237 is part of the active site. The active site involves Glu-266. The active-site Proton donor is the His-292. An NAD(+)-binding site is contributed by 292–295 (HIGS).

Homodimer.

It catalyses the reaction phosphonate + NAD(+) + H2O = phosphate + NADH + H(+). Its activity is regulated as follows. Inhibited by NaCl, NADH and sulfite. Functionally, catalyzes phosphite (phosphonate) oxidation. The chain is Phosphonate dehydrogenase (ptxD) from Stutzerimonas stutzeri (Pseudomonas stutzeri).